Reading from the N-terminus, the 157-residue chain is Endoribonuclease YbeY (157 aa).

Residues His114, His118, and His124 each contribute to the Zn(2+) site.

Belongs to the endoribonuclease YbeY family. The cofactor is Zn(2+).

It is found in the cytoplasm. Its function is as follows. Single strand-specific metallo-endoribonuclease involved in late-stage 70S ribosome quality control and in maturation of the 3' terminus of the 16S rRNA. The sequence is that of Endoribonuclease YbeY from Edwardsiella ictaluri (strain 93-146).